A 231-amino-acid chain; its full sequence is Casparian strip membrane protein 1 (231 aa).

Over 1-69 (MSTSETATVI…FRQSDRGSRC (69 aa)) the chain is Cytoplasmic. Residues 70 to 90 (LAFLDFLLRIAAFGPALAAAI) traverse the membrane as a helical segment. The Extracellular segment spans residues 91-117 (ATGTSDETLSVFTEFFQFRARFDDFPA). Residues 118–138 (FLFLMVANAIAAGYLVLSLPF) traverse the membrane as a helical segment. At 139-152 (SAVVVLRPQATGLR) the chain is on the cytoplasmic side. A helical membrane pass occupies residues 153 to 173 (LLLLVCDTIMIGLLTAAAAAA). Topologically, residues 174–207 (AAIVELAHNGNERANWVAICMQFHGFCQRTSGAV) are extracellular. The chain crosses the membrane as a helical span at residues 208-228 (VASFLSVFLFLLLVVLAAFAI). The Cytoplasmic segment spans residues 229 to 231 (RKR).

Belongs to the Casparian strip membrane proteins (CASP) family. In terms of assembly, homodimer and heterodimers.

The protein localises to the cell membrane. Functionally, regulates membrane-cell wall junctions and localized cell wall deposition. Required for establishment of the Casparian strip membrane domain (CSD) and the subsequent formation of Casparian strips, a cell wall modification of the root endodermis that determines an apoplastic barrier between the intraorganismal apoplasm and the extraorganismal apoplasm and prevents lateral diffusion. In Brachypodium distachyon (Purple false brome), this protein is Casparian strip membrane protein 1.